Here is a 504-residue protein sequence, read N- to C-terminus: Transcription factor NDT80 (504 aa).

Disordered regions lie at residues 64-172 (MHFN…QHHM), 283-310 (NGFP…NQHA), and 477-504 (RGRS…TPPQ). 4 stretches are compositionally biased toward low complexity: residues 73 to 87 (QQQQ…QQQQ), 103 to 145 (QGPT…ARQP), 153 to 172 (QQAQ…QHHM), and 292 to 301 (HPQNQPQNHP). The NDT80 DNA-binding region spans 160-488 (QADAQSQAQQ…RSPSSYHKDR (329 aa)).

Its subcellular location is the nucleus. Functionally, meiosis-specific transcription factor that binds to the middle sporulation element (MSE) of targeted genes corresponding to the consensus sequence 5'-ACACAAA-3'. Acts as an activator of CDR1 induction by antifungal drugs. Modulates azole sensitivity by controlling the expression of ergosterol biosynthesis genes. Required for hyphal growth in response to different filament-inducing cues and for the proper expression of genes characterizing the filamentous transcriptional program including noteworthy genes encoding cell wall components, such as HWP1, ECE1, RBT4, and ALS3. Is essential for the completion of cell separation through the direct transcriptional regulation of genes encoding the chitinase CHT3 and the cell wall glucosidase SUN41. Required for biofilm formation and plays a key role in microcolony formation under both flow and static conditions and to epithelial surfaces. Essential for virulence. In Candida albicans (strain SC5314 / ATCC MYA-2876) (Yeast), this protein is Transcription factor NDT80.